A 347-amino-acid chain; its full sequence is UDP-galactose/UDP-glucose transporter 5 (347 aa).

The next 8 helical transmembrane spans lie at 17–37, 57–77, 116–136, 143–163, 177–197, 218–238, 247–267, and 293–313; these read LWKAVFAISGIMLTLVIYGLL, LFLVFCNRLTTSAVSAAALLA, VQTLAKCAKMIPVMVWGTLIM, FDYLVAFLVTLGCSVFILFPA, TVWGVSLMVGYLGFDGFTSTF, ICSSILSFTGLILQGHLLPAV, CLFDIALLSTVATASQFFISY, and CIWFSHPLSWEQCIGSVIVFG. Residues 325–347 form a disordered region; the sequence is SEKPPAAQELPRDEEAQPLKGNP.

Belongs to the nucleotide-sugar transporter family. UDP-galactose:UMP antiporter (TC 2.A.7.11) subfamily.

It localises to the membrane. Sugar transporter involved in the transport of nucleotide-sugars from cytoplasm into the Golgi and/or the endoplasmic reticulum. This is UDP-galactose/UDP-glucose transporter 5 from Arabidopsis thaliana (Mouse-ear cress).